A 440-amino-acid polypeptide reads, in one-letter code: 5-hydroxytryptamine receptor 6 (440 aa).

The Extracellular portion of the chain corresponds to 1-27 (MVPEPGPVNSSTPAWGPGPPPAPGGSG). The N-linked (GlcNAc...) asparagine glycan is linked to Asn9. Residues 28–52 (WVAAALCVVIVLTAAANSLLIALIC) form a helical membrane-spanning segment. The Cytoplasmic portion of the chain corresponds to 53-62 (TQPALRNTSN). A helical membrane pass occupies residues 63 to 88 (FFLVSLFTSDLMVGLVVMPPAMLNAL). At 89-96 (YGRWVLAR) the chain is on the extracellular side. Residues 97-122 (GLCLLWTAFDVMCCSASILNLCLISL) traverse the membrane as a helical segment. Cys99 and Cys180 form a disulfide bridge. Asp106 contacts serotonin. Residues 123–142 (DRYLLILSPLRYKLRMTAPR) are Cytoplasmic-facing. Residues 143–167 (ALALILGAWSLAALASFLPLLLGWH) form a helical membrane-spanning segment. Residues 168–185 (ELGKARTSAPGQCRLLAS) lie on the Extracellular side of the membrane. Residues 186–209 (LPYVLVASGVTFFLPSGAICFTYC) traverse the membrane as a helical segment. The Cytoplasmic portion of the chain corresponds to 210 to 268 (RILLAARKQAVQVASLTTGTATAGQALETLQVPRTPRPGMESADSRRLTTKHSRKALKA). Residues 269-295 (SLTLGILLSMFFVTWLPFFVASIAQAV) traverse the membrane as a helical segment. The Extracellular portion of the chain corresponds to 296–301 (CDCISP). The chain crosses the membrane as a helical span at residues 302 to 325 (GLFDVLTWLGYCNSTMNPIIYPLF). The Cytoplasmic segment spans residues 326-440 (MRDFKRALGR…RQHPLGSPMN (115 aa)).

It belongs to the G-protein coupled receptor 1 family. In terms of assembly, interacts with CDK5. Interacts with MTOR. Interacts with RPTOR and NF1.

The protein localises to the cell membrane. G-protein coupled receptor for 5-hydroxytryptamine (serotonin), a biogenic hormone that functions as a neurotransmitter, a hormone and a mitogen. Also has a high affinity for tricyclic psychotropic drugs. Ligand binding causes a conformation change that triggers signaling via guanine nucleotide-binding proteins (G proteins) and modulates the activity of downstream effectors. HTR6 is coupled to G(s) G alpha proteins and mediates activation of adenylate cyclase activity. Controls pyramidal neurons migration during corticogenesis, through the regulation of CDK5 activity. Is an activator of mTOR signaling. The chain is 5-hydroxytryptamine receptor 6 from Mus musculus (Mouse).